The primary structure comprises 732 residues: Elongation factor 2 (732 aa).

The region spanning 19–260 is the tr-type G domain; the sequence is ERIRNMGIAA…MVVRHLPNPL (242 aa). GTP-binding positions include 28 to 35, 94 to 98, and 148 to 151; these read AHIDHGKT, DTPGH, and NKVD. Histidine 597 carries the diphthamide modification.

This sequence belongs to the TRAFAC class translation factor GTPase superfamily. Classic translation factor GTPase family. EF-G/EF-2 subfamily.

It localises to the cytoplasm. Its function is as follows. Catalyzes the GTP-dependent ribosomal translocation step during translation elongation. During this step, the ribosome changes from the pre-translocational (PRE) to the post-translocational (POST) state as the newly formed A-site-bound peptidyl-tRNA and P-site-bound deacylated tRNA move to the P and E sites, respectively. Catalyzes the coordinated movement of the two tRNA molecules, the mRNA and conformational changes in the ribosome. This chain is Elongation factor 2, found in Thermococcus onnurineus (strain NA1).